The primary structure comprises 185 residues: Ribosome-recycling factor (185 aa).

It belongs to the RRF family.

Its subcellular location is the cytoplasm. In terms of biological role, responsible for the release of ribosomes from messenger RNA at the termination of protein biosynthesis. May increase the efficiency of translation by recycling ribosomes from one round of translation to another. The polypeptide is Ribosome-recycling factor (Shewanella pealeana (strain ATCC 700345 / ANG-SQ1)).